We begin with the raw amino-acid sequence, 141 residues long: Large ribosomal subunit protein uL16 (141 aa).

Residues 1-17 show a composition bias toward basic residues; sequence MLQPKRTKYRKVQKGKM. The interval 1 to 29 is disordered; the sequence is MLQPKRTKYRKVQKGKMKGNSQRGHELSN.

This sequence belongs to the universal ribosomal protein uL16 family. In terms of assembly, part of the 50S ribosomal subunit.

In terms of biological role, binds 23S rRNA and is also seen to make contacts with the A and possibly P site tRNAs. The protein is Large ribosomal subunit protein uL16 of Flavobacterium psychrophilum (strain ATCC 49511 / DSM 21280 / CIP 103535 / JIP02/86).